A 146-amino-acid chain; its full sequence is Putative pre-16S rRNA nuclease (146 aa).

It belongs to the YqgF nuclease family.

The protein localises to the cytoplasm. Its function is as follows. Could be a nuclease involved in processing of the 5'-end of pre-16S rRNA. This is Putative pre-16S rRNA nuclease from Methylobacillus flagellatus (strain ATCC 51484 / DSM 6875 / VKM B-1610 / KT).